Here is a 79-residue protein sequence, read N- to C-terminus: MELEAMSRYTSPVNPAVFPHLTVVLLAIGMFFTAWFFVYEVTSTKYTRDIYKELLISLVASLFMGFGVLFLLLWVGIYV.

A run of 2 helical transmembrane segments spans residues 17 to 37 (VFPH…AWFF) and 55 to 75 (LISL…LLWV).

It belongs to the OST5 family. In terms of assembly, component of the oligosaccharyltransferase (OST) complex.

It localises to the membrane. The protein resides in the endoplasmic reticulum. Its subcellular location is the cytoplasm. It functions in the pathway protein modification; protein glycosylation. Subunit of the oligosaccharyl transferase (OST) complex that catalyzes the initial transfer of a defined glycan (Glc(3)Man(9)GlcNAc(2) in eukaryotes) from the lipid carrier dolichol-pyrophosphate to an asparagine residue within an Asn-X-Ser/Thr consensus motif in nascent polypeptide chains, the first step in protein N-glycosylation. N-glycosylation occurs cotranslationally and the complex associates with the Sec61 complex at the channel-forming translocon complex that mediates protein translocation across the endoplasmic reticulum (ER). All subunits are required for a maximal enzyme activity. This chain is Dolichyl-diphosphooligosaccharide--protein glycosyltransferase subunit TMEM258, found in Gallus gallus (Chicken).